The sequence spans 139 residues: Prostate-associated microseminoprotein (139 aa).

A signal peptide spans 1–35; sequence MALRMLWAGQAKGILGGWRTICLVVSLFLQHPGVS. 5 cysteine pairs are disulfide-bonded: cysteine 38–cysteine 78, cysteine 46–cysteine 69, cysteine 64–cysteine 100, cysteine 67–cysteine 77, and cysteine 91–cysteine 114. Residues 116-139 form a disordered region; sequence GGGPDLEWGSANTPAPGASAPHSS.

It belongs to the beta-microseminoprotein family.

Its subcellular location is the secreted. Functionally, acts as a ligand for C-C chemokine receptor CCR2. Signals through binding and activation of CCR2 and induces a strong chemotactic response and mobilization of intracellular calcium ions. Exhibits a chemotactic activity for monocytes and lymphocytes but not neutrophils. This chain is Prostate-associated microseminoprotein (Msmp), found in Mus musculus (Mouse).